Consider the following 208-residue polypeptide: Uracil phosphoribosyltransferase (208 aa).

Residues Arg78, Arg103, and 130–138 (DPMLATGGS) each bind 5-phospho-alpha-D-ribose 1-diphosphate. Uracil contacts are provided by residues Ile193 and 198-200 (GDA). Asp199 is a binding site for 5-phospho-alpha-D-ribose 1-diphosphate.

The protein belongs to the UPRTase family. The cofactor is Mg(2+).

It catalyses the reaction UMP + diphosphate = 5-phospho-alpha-D-ribose 1-diphosphate + uracil. It functions in the pathway pyrimidine metabolism; UMP biosynthesis via salvage pathway; UMP from uracil: step 1/1. Its activity is regulated as follows. Allosterically activated by GTP. Catalyzes the conversion of uracil and 5-phospho-alpha-D-ribose 1-diphosphate (PRPP) to UMP and diphosphate. This Haemophilus influenzae (strain 86-028NP) protein is Uracil phosphoribosyltransferase.